The sequence spans 131 residues: Fluoride-specific ion channel FluC (131 aa).

3 helical membrane passes run 3–23 (AAAN…GAWL), 34–54 (IFLT…LLMG), and 62–82 (AVPA…LGGL). Na(+) is bound by residues Gly80 and Thr83. Residues 101-121 (WGWLALHAAVHVAGSLLMAWI) form a helical membrane-spanning segment.

It belongs to the fluoride channel Fluc/FEX (TC 1.A.43) family.

It localises to the cell inner membrane. The enzyme catalyses fluoride(in) = fluoride(out). With respect to regulation, na(+) is not transported, but it plays an essential structural role and its presence is essential for fluoride channel function. Fluoride-specific ion channel. Important for reducing fluoride concentration in the cell, thus reducing its toxicity. The chain is Fluoride-specific ion channel FluC from Aromatoleum aromaticum (strain DSM 19018 / LMG 30748 / EbN1) (Azoarcus sp. (strain EbN1)).